An 825-amino-acid chain; its full sequence is Quinic acid utilization activator (825 aa).

The segment covering 1–12 has biased composition (polar residues); the sequence is MSSDTRQTSGGN. The segment at 1–45 is disordered; it reads MSSDTRQTSGGNARSKRRLTDAVDEDGRPTATAEDPTSNPKRQRV. The span at 18–28 shows a compositional bias: basic and acidic residues; the sequence is RLTDAVDEDGR. A DNA-binding region (zn(2)-C6 fungal-type) is located at residues 49–76; the sequence is CDSCRSKKDKCDGAQPICSTCASLSRPC. Disordered stretches follow at residues 160–186, 204–224, and 658–683; these read EQPE…SSVL, QSPL…TTRL, and GSQR…SLPG. Residues 165-174 are compositionally biased toward basic and acidic residues; sequence DQERSARGEI. Over residues 658 to 672 the composition is skewed to polar residues; the sequence is GSQRRPRHATQQGTH.

The protein resides in the nucleus. Functionally, transcription activation of genes for enzymes and proteins of quinate metabolism by binding to a 16 base-pair sequence (consensus 5'-GGATAANNNNTTATCC-3') in front of each qut gene. The polypeptide is Quinic acid utilization activator (qutA) (Emericella nidulans (strain FGSC A4 / ATCC 38163 / CBS 112.46 / NRRL 194 / M139) (Aspergillus nidulans)).